Here is a 292-residue protein sequence, read N- to C-terminus: Putative gonadotropin-releasing hormone II receptor (292 aa).

Residues 1-28 lie on the Extracellular side of the membrane; sequence MSAGNGTPWDATWNITVQWLAVDIACRT. Cysteines 26 and 101 form a disulfide. The helical transmembrane segment at 29–49 threads the bilayer; the sequence is LMFLKLMATYSAAFLPVVIGL. At 50 to 67 the chain is on the cytoplasmic side; it reads DRQAAVLNPLGSRSGVRK. A helical membrane pass occupies residues 68–88; it reads LLGAAWGLSFLLAFPQLFLFH. At 89-115 the chain is on the extracellular side; that stretch reads TVHCAGPVPFTQCVTKGSFKAQWQETT. The chain crosses the membrane as a helical span at residues 116-136; that stretch reads YNLFTFCCLFLLPLTAMAICY. Residues 137–177 lie on the Cytoplasmic side of the membrane; that stretch reads SRIVLSVSRPQTRKGSHAPAGEFALPRSFDNCPRVRLRALR. A helical transmembrane segment spans residues 178 to 198; that stretch reads LALLILLTFILCWTPYYLLGM. The Extracellular portion of the chain corresponds to 199–216; that stretch reads WYWFSPTMLTEVPPSLSH. The helical transmembrane segment at 217 to 237 threads the bilayer; sequence ILFLLGLLNAPLDPLLYGAFT. Topologically, residues 238–292 are cytoplasmic; that stretch reads LGCRRGHQELSIDSSKEGSGRMLQEEIHAFRQLEVQKTVTSRRAGETKGISITSI.

The protein belongs to the G-protein coupled receptor 1 family. Post-translationally, phosphorylated on the C-terminal cytoplasmic tail. Expressed in many tissues.

Its subcellular location is the cell membrane. In terms of biological role, putative receptor for gonadotropin releasing hormone II (GnRH II) which is most probably non-functional. The sequence is that of Putative gonadotropin-releasing hormone II receptor (GNRHR2) from Homo sapiens (Human).